Here is a 398-residue protein sequence, read N- to C-terminus: 1-deoxy-D-xylulose 5-phosphate reductoisomerase (398 aa).

8 residues coordinate NADPH: threonine 10, glycine 11, serine 12, isoleucine 13, glycine 36, lysine 37, asparagine 38, and asparagine 124. Lysine 125 contributes to the 1-deoxy-D-xylulose 5-phosphate binding site. Glutamate 126 provides a ligand contact to NADPH. Position 150 (aspartate 150) interacts with Mn(2+). Residues serine 151, glutamate 152, serine 186, and histidine 209 each contribute to the 1-deoxy-D-xylulose 5-phosphate site. Residue glutamate 152 coordinates Mn(2+). Residue glycine 215 coordinates NADPH. Positions 222, 227, 228, and 231 each coordinate 1-deoxy-D-xylulose 5-phosphate. Mn(2+) is bound at residue glutamate 231.

The protein belongs to the DXR family. In terms of assembly, homodimer. Mg(2+) serves as cofactor. Requires Mn(2+) as cofactor.

It catalyses the reaction 2-C-methyl-D-erythritol 4-phosphate + NADP(+) = 1-deoxy-D-xylulose 5-phosphate + NADPH + H(+). It functions in the pathway isoprenoid biosynthesis; isopentenyl diphosphate biosynthesis via DXP pathway; isopentenyl diphosphate from 1-deoxy-D-xylulose 5-phosphate: step 1/6. Functionally, catalyzes the NADPH-dependent rearrangement and reduction of 1-deoxy-D-xylulose-5-phosphate (DXP) to 2-C-methyl-D-erythritol 4-phosphate (MEP). This Salmonella paratyphi A (strain ATCC 9150 / SARB42) protein is 1-deoxy-D-xylulose 5-phosphate reductoisomerase.